We begin with the raw amino-acid sequence, 141 residues long: Nucleoside triphosphatase NudI (141 aa).

Residues 1–141 (MRQRTIVCPL…RKTLRLKGLL (141 aa)) enclose the Nudix hydrolase domain. The Nudix box motif lies at 38-59 (GGVEPGERIEEALRREIREELG).

The protein belongs to the Nudix hydrolase family. NudI subfamily. In terms of assembly, monomer. Requires Mg(2+) as cofactor.

The enzyme catalyses a ribonucleoside 5'-triphosphate + H2O = a ribonucleoside 5'-phosphate + diphosphate + H(+). The catalysed reaction is a 2'-deoxyribonucleoside 5'-triphosphate + H2O = a 2'-deoxyribonucleoside 5'-phosphate + diphosphate + H(+). It catalyses the reaction dUTP + H2O = dUMP + diphosphate + H(+). It carries out the reaction dTTP + H2O = dTMP + diphosphate + H(+). The enzyme catalyses dCTP + H2O = dCMP + diphosphate + H(+). Its function is as follows. Catalyzes the hydrolysis of nucleoside triphosphates, with a preference for pyrimidine deoxynucleoside triphosphates (dUTP, dTTP and dCTP). This is Nucleoside triphosphatase NudI from Escherichia coli O17:K52:H18 (strain UMN026 / ExPEC).